Consider the following 333-residue polypeptide: Probable cytosolic iron-sulfur protein assembly protein CIAO1 homolog (333 aa).

WD repeat units follow at residues 22 to 61 (APYDKVWNLAWHPNGEILATCANDKYIQIWSKDTNGKWGL), 67 to 106 (GHEKTVRRVAWSPCGRFLAGASFDASTSIWEKSKDELEFT), 113 to 152 (GHTYEVKSVAWDSTGTLLATCSRDKSIWIWQMEDDNDFEC), 158 to 197 (GHGQDIKCVLWHPNEELLASSSYDDTIKFWKDIDGDWECI), 202 to 241 (GHESSIWDLAFNKDGDKLVSCGEDKLVLFWKFDKENEKWI), 249 to 288 (ENSRPIYSIDWSSLTNTIVTGSADDSIIFYEQESDDTPDK), and 298 to 333 (AHDSDVNCTKWNPKFKNILASCGDDGFIKIWELQDK).

It belongs to the WD repeat CIA1 family.

Its function is as follows. Essential component of the cytosolic iron-sulfur (Fe/S) protein assembly machinery. Required for the maturation of extramitochondrial Fe/S proteins. This is Probable cytosolic iron-sulfur protein assembly protein CIAO1 homolog (ciao1) from Dictyostelium discoideum (Social amoeba).